A 354-amino-acid chain; its full sequence is Ornithine carbamoyltransferase, catabolic (354 aa).

Residues 67 to 70, Gln-94, Arg-118, and 145 to 148 each bind carbamoyl phosphate; these read STRT and HPTQ. L-ornithine is bound by residues Asn-177, Asp-241, and 245–246; that span reads SM. Carbamoyl phosphate is bound by residues 284–285 and Arg-329; that span reads CL.

It belongs to the aspartate/ornithine carbamoyltransferase superfamily. OTCase family.

The protein resides in the cytoplasm. The catalysed reaction is carbamoyl phosphate + L-ornithine = L-citrulline + phosphate + H(+). Its pathway is amino-acid degradation; L-arginine degradation via ADI pathway; carbamoyl phosphate from L-arginine: step 2/2. Reversibly catalyzes the transfer of the carbamoyl group from carbamoyl phosphate (CP) to the N(epsilon) atom of ornithine (ORN) to produce L-citrulline. This Lactococcus lactis subsp. cremoris (strain MG1363) protein is Ornithine carbamoyltransferase, catabolic (arcB).